Reading from the N-terminus, the 59-residue chain is Large ribosomal subunit protein bL32 (59 aa).

Positions 1-16 are enriched in basic residues; that stretch reads MAVPKRKTSPSRRGMR. The segment at 1–59 is disordered; sequence MAVPKRKTSPSRRGMRRSADALKAPTYVEDKNSGELRRPHHIDLKSGMYRGRQVLEPKE. Over residues 28-44 the composition is skewed to basic and acidic residues; that stretch reads VEDKNSGELRRPHHIDL.

It belongs to the bacterial ribosomal protein bL32 family.

The sequence is that of Large ribosomal subunit protein bL32 from Brucella abortus (strain S19).